The chain runs to 74 residues: Beta-defensin 39 (74 aa).

The first 23 residues, 1–23 (MKISYFLLLILSLGSSQINPVSG), serve as a signal peptide directing secretion. 3 disulfide bridges follow: Cys-29–Cys-58, Cys-36–Cys-51, and Cys-41–Cys-59.

This sequence belongs to the beta-defensin family. In terms of tissue distribution, only expressed in epididymis (caput, corpus and cauda).

It is found in the secreted. Functionally, has antibacterial activity. The sequence is that of Beta-defensin 39 (Defb39) from Mus musculus (Mouse).